The following is a 113-amino-acid chain: Cholecystoxin (113 aa).

Positions 1–20 (MYGGICLCVLLAVLAISSSG) are cleaved as a signal peptide. The propeptide occupies 21–79 (QHISRSLNGNSLAAAIEQNFPEKHRPARTPDSNQRVESNIDEKANLGVLLARYLQKARR). The interval 77–97 (ARRGTNGKPPDPKKESQDYLG) is disordered. Y95 carries the post-translational modification Sulfotyrosine. A Phenylalanine amide modification is found at F101. The propeptide occupies 102–113 (GRRSAEEYEYSS).

Belongs to the gastrin/cholecystokinin family. In terms of tissue distribution, expressed by the mandibular venom gland.

It is found in the secreted. Its function is as follows. Cholecystokinin-22: hypotensive neuropeptide that binds cholecystokinin receptor type A receptor (CCKAR). Cholecystokinin-8: hypotensive neuropeptide that binds cholecystokinin receptor type A receptor (CCKAR). The protein is Cholecystoxin of Varanus varius (Lace monitor lizard).